A 239-amino-acid chain; its full sequence is Small ribosomal subunit protein uS2 (239 aa).

This sequence belongs to the universal ribosomal protein uS2 family.

The sequence is that of Small ribosomal subunit protein uS2 from Francisella tularensis subsp. tularensis (strain FSC 198).